The sequence spans 1024 residues: NLR family CARD domain-containing protein 4 (1024 aa).

Positions 1–88 constitute a CARD domain; the sequence is MNFIRNNRRA…FVYQDLTGQN (88 aa). The tract at residues 95-298 is nucleotide-binding domain (NBD); it reads EEDLNVLAQN…HVGALTAEVG (204 aa). Residues threonine 135, 172–177, and histidine 443 contribute to the ATP site; that span reads GKGKST. Positions 163–476 constitute an NACHT domain; that stretch reads SPCLIEGESG…VSKGNSYLNK (314 aa). Residues 356–463 form a winged-helix domain (WHD) region; it reads AHTQTMLFQT…RLSSLLTSKE (108 aa). A Phosphoserine modification is found at serine 533. 12 LRR repeats span residues 578–598, 656–679, 735–758, 762–785, 787–812, 824–847, 848–870, 878–902, 911–933, 936–963, 965–985, and 999–1021; these read FFQG…LFDF, KQEF…DIKY, VTGL…LIDS, LKNL…NLAE, LRSL…DYIV, EMKL…LHNL, IKLS…ALQE, LGEL…LLKQ, KLGL…FLEM, LRDL…VFEN, KQLV…ALVR, and EVKL…TFKL.

As to quaternary structure, homooligomer; homooligomerizes following activation of Naip proteins by pathogenic proteins such as S.typhimurium (Salmonella) flagellin or PrgJ. Component of the NLRC4 inflammasome, at least composed of NLRC4, caspase-1 (CASP1) and some NAIP protein (Naip, Naip2 or Naip5). Interacts with Naip5 and Naip6; following Naip5 and Naip6 engagement by Salmonella flagellin. Interacts with Naip2; following Naip2 engagement by Salmonella PrgJ. The inflammasome is a huge complex that contains multiple copies of NLRC4 and a single Naip protein chain. Some NLRC4 inflammasomes contain PYCARD/ASC, while some others directly contact and activate CASP1. Interacts with EIF2AK2/PKR. Post-translationally, phosphorylated at Ser-533 following infection of macrophages with S.typhimurium (Salmonella). Phosphorylation is essential for NLRC4 inflammasome function to promote caspase-1 activation and pyroptosis. PRKCD phosphorylates Ser-533 in vitro. Expressed by intestinal mononuclear phagocytes.

The protein resides in the cytoplasm. The protein localises to the cytosol. Its subcellular location is the inflammasome. Its function is as follows. Key component of inflammasomes that indirectly senses specific proteins from pathogenic bacteria and fungi and responds by assembling an inflammasome complex that promotes caspase-1 activation, cytokine production and macrophage pyroptosis. The NLRC4 inflammasome is activated as part of the innate immune response to a range of intracellular bacteria. It senses pathogenic proteins of the type III secretion system (T3SS) and type IV secretion system (T4SS) such as flagellin and PrgJ-like rod proteins via the Naip proteins (Naip1, Naip2 or Naip5): specific Naip proteins recognize and bind pathogenic proteins, driving assembly and activation of the NLRC4 inflammasome. The NLRC4 inflammasome senses Gram-negative bacteria such as L.pneumophila and P.aeruginosa, enteric pathogens S.typhimurium (Salmonella) and S.flexneri and fungal pathogen C.albicans. In intestine, the NLRC4 inflammasome is able to discriminate between commensal and pathogenic bacteria and specifically drives production of interleukin-1 beta (IL1B) in response to infection by Salmonella or P.aeruginosa. In case of L.pneumophila infection the inflammasome acts by activating caspase-7. The sequence is that of NLR family CARD domain-containing protein 4 (Nlrc4) from Mus musculus (Mouse).